Reading from the N-terminus, the 487-residue chain is GTPase Der (487 aa).

EngA-type G domains are found at residues 3–166 and 193–366; these read PVIA…PRDA and IKIA…QSAV. GTP contacts are provided by residues 9–16, 56–60, 118–121, 199–206, 246–250, and 311–314; these read GRPNVGKS, DTGGI, NKID, DTAGV, and NKWD. One can recognise a KH-like domain in the interval 367 to 451; that stretch reads TRWPTSRLTQ…PIRIEYKGGE (85 aa). Residues 448 to 461 show a composition bias toward basic and acidic residues; that stretch reads KGGENPYEGKKNTL. The tract at residues 448–487 is disordered; the sequence is KGGENPYEGKKNTLTDRQVNKKRRLMSHHKKAEKKRRDKR. Positions 467–487 are enriched in basic residues; the sequence is NKKRRLMSHHKKAEKKRRDKR.

Belongs to the TRAFAC class TrmE-Era-EngA-EngB-Septin-like GTPase superfamily. EngA (Der) GTPase family. Associates with the 50S ribosomal subunit.

Functionally, GTPase that plays an essential role in the late steps of ribosome biogenesis. In Pseudomonas putida (strain ATCC 47054 / DSM 6125 / CFBP 8728 / NCIMB 11950 / KT2440), this protein is GTPase Der.